A 79-amino-acid polypeptide reads, in one-letter code: Sec-independent protein translocase protein TatA (79 aa).

The helical transmembrane segment at 1 to 21 (MHMPSGTQWLIILLIVVLLFG) threads the bilayer.

This sequence belongs to the TatA/E family. The Tat system comprises two distinct complexes: a TatABC complex, containing multiple copies of TatA, TatB and TatC subunits, and a separate TatA complex, containing only TatA subunits. Substrates initially bind to the TatABC complex, which probably triggers association of the separate TatA complex to form the active translocon.

The protein localises to the cell inner membrane. Its function is as follows. Part of the twin-arginine translocation (Tat) system that transports large folded proteins containing a characteristic twin-arginine motif in their signal peptide across membranes. TatA could form the protein-conducting channel of the Tat system. The polypeptide is Sec-independent protein translocase protein TatA (Campylobacter lari (strain RM2100 / D67 / ATCC BAA-1060)).